The primary structure comprises 276 residues: UPF0328 protein ECU04_0100 (276 aa).

A disordered region spans residues 1–24 (MGIIDVQRSHLTATPSKERDAPAH).

It belongs to the UPF0328 family.

In Encephalitozoon cuniculi (strain GB-M1) (Microsporidian parasite), this protein is UPF0328 protein ECU04_0100.